We begin with the raw amino-acid sequence, 336 residues long: tRNA N6-adenosine threonylcarbamoyltransferase (336 aa).

Histidine 114 and histidine 118 together coordinate Fe cation. Substrate is bound by residues 136–140 (LVSGG), aspartate 169, glycine 182, aspartate 186, and asparagine 275. Residue aspartate 301 coordinates Fe cation.

It belongs to the KAE1 / TsaD family. Requires Fe(2+) as cofactor.

It localises to the cytoplasm. The enzyme catalyses L-threonylcarbamoyladenylate + adenosine(37) in tRNA = N(6)-L-threonylcarbamoyladenosine(37) in tRNA + AMP + H(+). In terms of biological role, required for the formation of a threonylcarbamoyl group on adenosine at position 37 (t(6)A37) in tRNAs that read codons beginning with adenine. Is involved in the transfer of the threonylcarbamoyl moiety of threonylcarbamoyl-AMP (TC-AMP) to the N6 group of A37, together with TsaE and TsaB. TsaD likely plays a direct catalytic role in this reaction. In Streptococcus pneumoniae serotype 19F (strain G54), this protein is tRNA N6-adenosine threonylcarbamoyltransferase.